The sequence spans 196 residues: Glycerol-3-phosphate acyltransferase (196 aa).

The next 5 helical transmembrane spans lie at Phe4–Thr24, Leu53–Ile73, Leu78–Val98, Ile114–Val134, and Val140–Gly160.

This sequence belongs to the PlsY family. Probably interacts with PlsX.

It localises to the cell inner membrane. The enzyme catalyses an acyl phosphate + sn-glycerol 3-phosphate = a 1-acyl-sn-glycero-3-phosphate + phosphate. It participates in lipid metabolism; phospholipid metabolism. In terms of biological role, catalyzes the transfer of an acyl group from acyl-phosphate (acyl-PO(4)) to glycerol-3-phosphate (G3P) to form lysophosphatidic acid (LPA). This enzyme utilizes acyl-phosphate as fatty acyl donor, but not acyl-CoA or acyl-ACP. The polypeptide is Glycerol-3-phosphate acyltransferase (Syntrophotalea carbinolica (strain DSM 2380 / NBRC 103641 / GraBd1) (Pelobacter carbinolicus)).